The following is a 368-amino-acid chain: S-adenosylmethionine:tRNA ribosyltransferase-isomerase (368 aa).

The protein belongs to the QueA family. As to quaternary structure, monomer.

Its subcellular location is the cytoplasm. The catalysed reaction is 7-aminomethyl-7-carbaguanosine(34) in tRNA + S-adenosyl-L-methionine = epoxyqueuosine(34) in tRNA + adenine + L-methionine + 2 H(+). The protein operates within tRNA modification; tRNA-queuosine biosynthesis. Its function is as follows. Transfers and isomerizes the ribose moiety from AdoMet to the 7-aminomethyl group of 7-deazaguanine (preQ1-tRNA) to give epoxyqueuosine (oQ-tRNA). This chain is S-adenosylmethionine:tRNA ribosyltransferase-isomerase, found in Methylorubrum extorquens (strain CM4 / NCIMB 13688) (Methylobacterium extorquens).